Reading from the N-terminus, the 546-residue chain is (-)-5-epieremophilene synthase STPS2 (546 aa).

Asp-299, Asp-303, Asp-442, Thr-446, and Glu-450 together coordinate Mg(2+). Residues 299–303 (DDTYD) carry the DDXXD motif motif.

The protein belongs to the terpene synthase family. Tpsa subfamily. As to quaternary structure, monomer. It depends on Mg(2+) as a cofactor. In terms of tissue distribution, highly expressed in leaves. Expressed at levels in flowers.

It carries out the reaction (2E,6E)-farnesyl diphosphate = (-)-5-epi-eremophilene + diphosphate. It participates in secondary metabolite biosynthesis; terpenoid biosynthesis. In terms of biological role, sesquiterpene synthase that catalyzes the conversion of farnesyl diphosphate to (-)-5-epi-eremophilene. The chain is (-)-5-epieremophilene synthase STPS2 from Salvia miltiorrhiza (Chinese sage).